A 682-amino-acid polypeptide reads, in one-letter code: MKFGKVIEGQSVAEWASAYFDYKKGKKIIAGIAKNPSEGLYGTSGILGETPEEAIVKRGQIHRFHPLFQEFLDQQANKVEEFFENLVSDARERMDLISDQVDIYEKLRAFKKGTLESGSVVLIQKQHSKLRQRLDSILNFSRLQPAYHIPARKSVPTDAYTPMVSYRKLKSKLKTTLLDFYDYLKLVSQYQHLNQQAFRKIVKKYDKTLHTDLQGFWVDYMSRYTFTDFSITTNWQLHVEDIYARLFTNHNKKLALEHLKSFRQKEHFSANSMRFGLLFGAGLPLAIEAACYYNATEQSSYLLQIWGGFFLVIFAFVLFDLDCYVWEKTRVNYMLIFEFNQRKSLNWRQHLEIVGAVFFIFSLFFFLCMRNFFPGFTIYFPALFLGVVGTFLIAPVIVPYWRMRRYLIIQLIRVFLSGLSTVHFQDFFFADQMVSLTYACGNISLFFCLYKRLWRQPQLCNSSHSPLLGFFTTLPGILRVFQCFRRYSDSLKSFPHLVNALKYIFNILAQMFLSLWRIHPGLKYRVLYTIFAGVNSLFSYTWDILMDWNLLVRKDGRWQFREHRILKQLWPYIIAMILNFIVRSSFIFYCIFPNHIQHSSGISFFVTLAEIMRRCMWNILRVEHEEIYNRENLRAARELKPLDFVKPHSDVFVSHQISSDKNYTDDEDSMDDQTDVDEAQFS.

In terms of domain architecture, SPX spans 1–219 (MKFGKVIEGQ…HTDLQGFWVD (219 aa)). Topologically, residues 1-274 (MKFGKVIEGQ…KEHFSANSMR (274 aa)) are cytoplasmic. Residues 275-295 (FGLLFGAGLPLAIEAACYYNA) traverse the membrane as a helical segment. The Extracellular segment spans residues 296–300 (TEQSS). The chain crosses the membrane as a helical span at residues 301–321 (YLLQIWGGFFLVIFAFVLFDL). The Cytoplasmic segment spans residues 322 to 348 (DCYVWEKTRVNYMLIFEFNQRKSLNWR). The helical transmembrane segment at 349–369 (QHLEIVGAVFFIFSLFFFLCM) threads the bilayer. The Extracellular segment spans residues 370 to 377 (RNFFPGFT). A helical transmembrane segment spans residues 378–398 (IYFPALFLGVVGTFLIAPVIV). At 399 to 406 (PYWRMRRY) the chain is on the cytoplasmic side. The chain crosses the membrane as a helical span at residues 407–424 (LIIQLIRVFLSGLSTVHF). The Extracellular portion of the chain corresponds to 425–426 (QD). A helical membrane pass occupies residues 427-447 (FFFADQMVSLTYACGNISLFF). Over 448–525 (CLYKRLWRQP…WRIHPGLKYR (78 aa)) the chain is Cytoplasmic. Residues 459-654 (LCNSSHSPLL…VKPHSDVFVS (196 aa)) form the EXS domain. Residues 526–546 (VLYTIFAGVNSLFSYTWDILM) form a helical membrane-spanning segment. The Extracellular portion of the chain corresponds to 547 to 571 (DWNLLVRKDGRWQFREHRILKQLWP). The helical transmembrane segment at 572–592 (YIIAMILNFIVRSSFIFYCIF) threads the bilayer. Residues 593–682 (PNHIQHSSGI…QTDVDEAQFS (90 aa)) are Cytoplasmic-facing. Residues 659 to 682 (SDKNYTDDEDSMDDQTDVDEAQFS) form a disordered region. Acidic residues predominate over residues 665-682 (DDEDSMDDQTDVDEAQFS).

Belongs to the SYG1 (TC 2.A.94) family.

It localises to the cell membrane. In terms of biological role, may function in G-protein coupled signal transduction. In Schizosaccharomyces pombe (strain 972 / ATCC 24843) (Fission yeast), this protein is Protein SYG1 homolog.